A 228-amino-acid polypeptide reads, in one-letter code: Prolactin (228 aa).

Positions Met1–Ser29 are cleaved as a signal peptide. The cysteines at positions 33 and 40 are disulfide-linked. Ser55, Ser63, and Ser119 each carry phosphoserine. Intrachain disulfides connect Cys87-Cys203 and Cys220-Cys228.

It belongs to the somatotropin/prolactin family. In terms of assembly, interacts with PRLR.

Its subcellular location is the secreted. Functionally, prolactin acts primarily on the mammary gland by promoting lactation. The sequence is that of Prolactin (PRL) from Monodelphis domestica (Gray short-tailed opossum).